Consider the following 342-residue polypeptide: Heat-inducible transcription repressor HrcA (342 aa).

It belongs to the HrcA family.

In terms of biological role, negative regulator of class I heat shock genes (grpE-dnaK-dnaJ and groELS operons). Prevents heat-shock induction of these operons. This chain is Heat-inducible transcription repressor HrcA, found in Shouchella clausii (strain KSM-K16) (Alkalihalobacillus clausii).